The chain runs to 203 residues: NAD(P)H dehydrogenase (quinone) (203 aa).

Residues 3-194 (VLIPFYSMYG…AGARYQGKYI (192 aa)) form the Flavodoxin-like domain. Residues 9 to 14 (SMYGHI) and 82 to 84 (TRF) contribute to the FMN site. Tyr11 contacts NAD(+). Trp102 contributes to the substrate binding site. FMN contacts are provided by residues 117–123 (SSATQHG) and His138.

This sequence belongs to the WrbA family. FMN serves as cofactor.

The enzyme catalyses a quinone + NADH + H(+) = a quinol + NAD(+). It catalyses the reaction a quinone + NADPH + H(+) = a quinol + NADP(+). This is NAD(P)H dehydrogenase (quinone) from Geobacter metallireducens (strain ATCC 53774 / DSM 7210 / GS-15).